We begin with the raw amino-acid sequence, 101 residues long: Small ribosomal subunit protein uS14A (101 aa).

The tract at residues 31–69 (IAAPGSSPEERAAAQQELRRQPRDASATRLRNRDAVDGR) is disordered. Residues 38–53 (PEERAAAQQELRRQPR) show a composition bias toward basic and acidic residues.

This sequence belongs to the universal ribosomal protein uS14 family. As to quaternary structure, part of the 30S ribosomal subunit. Contacts proteins S3 and S10.

In terms of biological role, binds 16S rRNA, required for the assembly of 30S particles and may also be responsible for determining the conformation of the 16S rRNA at the A site. This Saccharopolyspora erythraea (strain ATCC 11635 / DSM 40517 / JCM 4748 / NBRC 13426 / NCIMB 8594 / NRRL 2338) protein is Small ribosomal subunit protein uS14A.